The primary structure comprises 340 residues: Polyporopepsin (340 aa).

One can recognise a Peptidase A1 domain in the interval 14–330 (YVVNVGVGSP…DTTNKRLGLA (317 aa)). The active site involves aspartate 32. Residue asparagine 192 is glycosylated (N-linked (GlcNAc...) asparagine). Aspartate 212 is a catalytic residue. Asparagine 238 carries N-linked (GlcNAc...) asparagine glycosylation.

This sequence belongs to the peptidase A1 family.

The enzyme catalyses Milk clotting activity, broad specificity, but fails to cleave 15-Leu-|-Tyr-16 or 16-Tyr-|-Leu-17 of insulin B chain.. This is Polyporopepsin from Irpex lacteus (Milk-white toothed polypore).